Reading from the N-terminus, the 268-residue chain is Ubiquinone biosynthesis protein COQ4 homolog, mitochondrial (268 aa).

Residues His171, Asp172, His175, and Glu187 each contribute to the Zn(2+) site.

It belongs to the COQ4 family. Component of a multi-subunit COQ enzyme complex. Requires Zn(2+) as cofactor.

The protein localises to the mitochondrion inner membrane. The catalysed reaction is a 4-hydroxy-3-methoxy-5-(all-trans-polyprenyl)benzoate + H(+) = a 2-methoxy-6-(all-trans-polyprenyl)phenol + CO2. Its pathway is cofactor biosynthesis; ubiquinone biosynthesis. Its function is as follows. Lyase that catalyzes the C1-decarboxylation of 4-hydroxy-3-methoxy-5-(all-trans-polyprenyl)benzoic acid into 2-methoxy-6-(all-trans-polyprenyl)phenol during ubiquinone biosynthesis. The chain is Ubiquinone biosynthesis protein COQ4 homolog, mitochondrial from Drosophila yakuba (Fruit fly).